The chain runs to 35 residues: Malate dehydrogenase, mitochondrial (35 aa).

Asn-7 contacts NAD(+). Arg-23 is a substrate binding site.

Belongs to the LDH/MDH superfamily. MDH type 1 family. Homodimer.

The protein localises to the mitochondrion matrix. The enzyme catalyses (S)-malate + NAD(+) = oxaloacetate + NADH + H(+). The polypeptide is Malate dehydrogenase, mitochondrial (Capsicum annuum var. annuum (Red pepper)).